Consider the following 1247-residue polypeptide: Structural polyprotein (1247 aa).

Positions 52 to 103 (ALRTVPQKPRRTRKTKKQKQVKQEQQSTRNQKKKAPKQKQTQKKKRPGRRER) are disordered. Composition is skewed to basic residues over residues 59 to 71 (KPRRTRKTKKQKQ) and 81 to 100 (NQKKKAPKQKQTQKKKRPGR). Positions 86-99 (APKQKQTQKKKRPG) are ribosome-binding. The cysteines at positions 112 and 127 are disulfide-linked. The Peptidase S3 domain maps to 112-260 (CIFEVKHEGK…KITPEGSVEW (149 aa)). The active-site Charge relay system is H138. An interaction with spike glycoprotein E2 region spans residues 154-159 (KRSSKY). Catalysis depends on charge relay system residues D160 and S212. The interval 261-273 (SLALPVMCLLANT) is functions as an uncleaved signal peptide for the precursor of protein E3/E2. 9 disulfides stabilise this stretch: C268-C277, C282-C286, C285-C317, C343-C449, C346-C352, C415-C429, C477-C590, C525-C549, and C527-C544. N272 is a glycosylation site (N-linked (GlcNAc...) asparagine; by host). Over 325 to 691 (NARENFNVYK…YYYELYPTTT (367 aa)) the chain is Extracellular. N-linked (GlcNAc...) asparagine; by host glycosylation occurs at N587. The helical transmembrane segment at 692 to 712 (IAVLAAASIVVASLVSLSLGM) threads the bilayer. The Cytoplasmic portion of the chain corresponds to 713 to 747 (CICARRRCITPYELTPGATIPFLLGVLCCVKTAKA). Residues 715–719 (CARRR) form an interaction with the capsid protein region. 3 S-palmitoyl cysteine; by host lipidation sites follow: C720, C740, and C741. The transient transmembrane before p62-6K protein processing stretch occupies residues 720 to 740 (CITPYELTPGATIPFLLGVLC). C720 and C741 are disulfide-bonded. The Extracellular portion of the chain corresponds to 748 to 762 (ASYYEAATYLWNEQQ). The helical transmembrane segment at 763–783 (PLFWLQLLIPLSAAIVACNCL) threads the bilayer. The Cytoplasmic segment spans residues 784-787 (KLLP). Residues 788 to 808 (CCCKTLTFLAVMSIGARTVSA) traverse the membrane as a helical segment. Residues 809 to 1223 (YEHATVIPNT…AMSWVQKITG (415 aa)) lie on the Extracellular side of the membrane. 4 disulfides stabilise this stretch: C857-C922, C870-C902, C871-C904, and C876-C886. An E1 fusion peptide loop region spans residues 892–909 (VYPFMWGGAYCFCDAENT). N-linked (GlcNAc...) asparagine; by host glycosylation is found at N949 and N1078. Intrachain disulfides connect C1067–C1079, C1109–C1184, C1114–C1188, and C1136–C1178. A helical membrane pass occupies residues 1224–1244 (GVGLVVAIAALILIIVLCVSF). C1241 carries the S-palmitoyl cysteine; by host lipid modification. Residues 1245-1247 (SRH) lie on the Cytoplasmic side of the membrane.

In terms of assembly, homodimer. Homomultimer. Interacts with host karyopherin KPNA4; this interaction allows the nuclear import of the viral capsid protein. Interacts with spike glycoprotein E2. Interacts with host IRAK1; the interaction leads to inhibition of IRAK1-dependent signaling. The precursor of protein E3/E2 and E1 form a heterodimer shortly after synthesis. As to quaternary structure, the precursor of protein E3/E2 and E1 form a heterodimer shortly after synthesis. Processing of the precursor of protein E3/E2 into E2 and E3 results in a heterodimer of the spike glycoproteins E2 and E1. Spike at virion surface are constituted of three E2-E1 heterodimers. After target cell attachment and endocytosis, E1 change conformation to form homotrimers. Interacts with 6K protein. In terms of assembly, interacts with spike glycoprotein E1. Processing of the precursor of protein E3/E2 into E2 and E3 results in a heterodimer of the spike glycoproteins E2 and E1. Spike at virion surface are constituted of a trimer of E2-E1 heterodimers. Interacts with 6K protein. Interacts with host MXRA8; this interaction mediates virus entry. Oligomer. Interacts with spike glycoprotein E1. Interacts with spike glycoprotein E2. Post-translationally, structural polyprotein: Specific enzymatic cleavages in vivo yield mature proteins. Capsid protein is auto-cleaved during polyprotein translation, unmasking a signal peptide at the N-terminus of the precursor of E3/E2. The remaining polyprotein is then targeted to the host endoplasmic reticulum, where host signal peptidase cleaves it into pE2, 6K and E1 proteins. pE2 is further processed to mature E3 and E2 by host furin in trans-Golgi vesicle. In terms of processing, palmitoylated via thioester bonds. These palmitoylations may induce disruption of the C-terminus transmembrane. This would result in the reorientation of E2 C-terminus from lumenal to cytoplasmic side. N-glycosylated. Post-translationally, palmitoylated via thioester bonds.

It localises to the virion. The protein localises to the host cytoplasm. It is found in the host cell membrane. The protein resides in the virion membrane. Its subcellular location is the host Golgi apparatus. It localises to the host trans-Golgi network. The protein localises to the host endoplasmic reticulum. The catalysed reaction is Autocatalytic release of the core protein from the N-terminus of the togavirus structural polyprotein by hydrolysis of a -Trp-|-Ser- bond.. Functionally, possesses a protease activity that results in its autocatalytic cleavage from the nascent structural protein. Following its self-cleavage, the capsid protein transiently associates with ribosomes, and within several minutes the protein binds to viral RNA and rapidly assembles into icosahedric core particles. The resulting nucleocapsid eventually associates with the cytoplasmic domain of the spike glycoprotein E2 at the cell membrane, leading to budding and formation of mature virions. In case of infection, new virions attach to target cells and after clathrin-mediated endocytosis their membrane fuses with the host endosomal membrane. This leads to the release of the nucleocapsid into the cytoplasm, followed by an uncoating event necessary for the genomic RNA to become accessible. The uncoating might be triggered by the interaction of capsid proteins with ribosomes. Binding of ribosomes would release the genomic RNA since the same region is genomic RNA-binding and ribosome-binding. Its function is as follows. Provides the signal sequence for the translocation of the precursor of protein E3/E2 to the host endoplasmic reticulum. Mediates pH protection of spike glycoprotein E1 during the transport via the secretory pathway. Plays a role in viral attachment to target host cell, by binding to the cell receptor MXRA8. Synthesized as a p62 precursor which is processed by furin at the cell membrane just before virion budding, giving rise to E2-E1 heterodimer. The p62-E1 heterodimer is stable, whereas E2-E1 is unstable and dissociate at low pH. p62 is processed at the last step, presumably to avoid E1 fusion activation before its final export to cell surface. E2 C-terminus contains a transitory transmembrane that would be disrupted by palmitoylation, resulting in reorientation of the C-terminal tail from lumenal to cytoplasmic side. This step is critical since E2 C-terminus is involved in budding by interacting with capsid proteins. This release of E2 C-terminus in cytoplasm occurs lately in protein export, and precludes premature assembly of particles at the endoplasmic reticulum membrane. In terms of biological role, acts as a viroporin that participates in virus glycoprotein processing and transport to the plasma membrane, cell permeabilization and budding of viral particles. Disrupts the calcium homeostasis of the cell, probably at the endoplasmic reticulum level. This leads to cytoplasmic calcium elevation. Because of its lipophilic properties, the 6K protein is postulated to influence the selection of lipids that interact with the transmembrane domains of the glycoproteins, which, in turn, affects the deformability of the bilayer required for the extreme curvature that occurs as budding proceeds. Present in low amount in virions, about 3% compared to viral glycoproteins. Functionally, class II viral fusion protein. Fusion activity is inactive as long as E1 is bound to E2 in mature virion. After virus attachment to target cell via host MXRA8 and endocytosis, acidification of the endosome induce dissociation of E1/E2 heterodimer and concomitant trimerization of the E1 subunits. This E1 trimer is fusion active, and promotes release of viral nucleocapsid in cytoplasm after endosome and viral membrane fusion. Efficient fusion requires the presence of cholesterol and sphingolipid in the target membrane. The sequence is that of Structural polyprotein from O'nyong-nyong virus (strain SG650) (ONNV).